Reading from the N-terminus, the 128-residue chain is Ribonuclease P protein component 4 (128 aa).

Zn(2+) is bound by residues Cys63, Cys66, Cys92, and Cys95.

The protein belongs to the eukaryotic/archaeal RNase P protein component 4 family. In terms of assembly, consists of a catalytic RNA component and at least 4 protein subunits. Forms a subcomplex with Rnp1 which stimulates the catalytic RNA. The cofactor is Zn(2+).

The protein localises to the cytoplasm. It catalyses the reaction Endonucleolytic cleavage of RNA, removing 5'-extranucleotides from tRNA precursor.. Its function is as follows. Part of ribonuclease P, a protein complex that generates mature tRNA molecules by cleaving their 5'-ends. In Methanocaldococcus jannaschii (strain ATCC 43067 / DSM 2661 / JAL-1 / JCM 10045 / NBRC 100440) (Methanococcus jannaschii), this protein is Ribonuclease P protein component 4.